The sequence spans 964 residues: Syndetin (964 aa).

N-acetylmethionine is present on M1. Positions 1-25 (MQKIKSLMTRQGLKSPPESLNDLGA) are disordered. Position 15 is a phosphoserine (S15). 2 coiled-coil regions span residues 81-107 (LNLQ…VADL) and 216-244 (YSCI…LSKI). Residues S494, S498, S559, and S561 each carry the phosphoserine modification. Residues 532–563 (DEETEDVLASNGYESDEQEKSAYQDYDSDSDV) are disordered. K963 is covalently cross-linked (Glycyl lysine isopeptide (Lys-Gly) (interchain with G-Cter in SUMO1); alternate). Residue K963 forms a Glycyl lysine isopeptide (Lys-Gly) (interchain with G-Cter in SUMO2); alternate linkage.

This sequence belongs to the syndetin family. In terms of assembly, component of the endosome-associated retrograde protein (EARP) complex, composed of VPS51, VPS52, VPS53 and VPS50/Syndetin. The EARP complex interacts with EIPR1. Interacts with VPS51 and VPS53 in an EIPR1-independent manner. As to expression, expressed in the brain (at protein level).

The protein resides in the recycling endosome. Its subcellular location is the membrane. In terms of biological role, acts as a component of the EARP complex that is involved in endocytic recycling. The EARP complex associates with Rab4-positive endosomes and promotes recycling of internalized transferrin receptor (TFRC) to the plasma membrane. Within the EARP complex, required to tether the complex to recycling endosomes. Not involved in retrograde transport from early and late endosomes to the trans-Golgi network (TGN). The sequence is that of Syndetin from Rattus norvegicus (Rat).